We begin with the raw amino-acid sequence, 240 residues long: 4-hydroxy-tetrahydrodipicolinate reductase (240 aa).

NAD(+) is bound by residues 79 to 81 (ATT) and 103 to 106 (SANM). His135 serves as the catalytic Proton donor/acceptor. His136 is a (S)-2,3,4,5-tetrahydrodipicolinate binding site. Lys139 serves as the catalytic Proton donor. Position 145–146 (145–146 (GT)) interacts with (S)-2,3,4,5-tetrahydrodipicolinate.

It belongs to the DapB family.

Its subcellular location is the cytoplasm. It catalyses the reaction (S)-2,3,4,5-tetrahydrodipicolinate + NAD(+) + H2O = (2S,4S)-4-hydroxy-2,3,4,5-tetrahydrodipicolinate + NADH + H(+). The catalysed reaction is (S)-2,3,4,5-tetrahydrodipicolinate + NADP(+) + H2O = (2S,4S)-4-hydroxy-2,3,4,5-tetrahydrodipicolinate + NADPH + H(+). Its pathway is amino-acid biosynthesis; L-lysine biosynthesis via DAP pathway; (S)-tetrahydrodipicolinate from L-aspartate: step 4/4. Catalyzes the conversion of 4-hydroxy-tetrahydrodipicolinate (HTPA) to tetrahydrodipicolinate. In Staphylococcus aureus (strain bovine RF122 / ET3-1), this protein is 4-hydroxy-tetrahydrodipicolinate reductase.